Here is a 204-residue protein sequence, read N- to C-terminus: Recombination protein RecR (204 aa).

Residues 58–75 (CSICQNVTDRGDDPCSIC) form a C4-type zinc finger. Residues 83–181 (SKICVVESPP…EVTKIARGIP (99 aa)) enclose the Toprim domain.

It belongs to the RecR family.

Its function is as follows. May play a role in DNA repair. It seems to be involved in an RecBC-independent recombinational process of DNA repair. It may act with RecF and RecO. The polypeptide is Recombination protein RecR (Chlorobium phaeobacteroides (strain BS1)).